The primary structure comprises 603 residues: D-3-phosphoglycerate dehydrogenase 1, chloroplastic (603 aa).

The N-terminal 54 residues, 1 to 54, are a transit peptide targeting the chloroplast; that stretch reads MSATAAASSSIAVATNSLRNVTLSSRSPLPSAISVAFPSRGRNTLQRRLVLVSC. Residues 210–211, Asp-230, 289–291, and Asp-315 contribute to the NAD(+) site; these read KV and VAR. The active site involves Arg-291. Residue Glu-320 is part of the active site. His-339 functions as the Proton donor in the catalytic mechanism. NAD(+) is bound at residue 339–342; that stretch reads HLGA. An ACT domain is found at 531–603; it reads IILCRQVDQP…AVEEFVFLKL (73 aa).

This sequence belongs to the D-isomer specific 2-hydroxyacid dehydrogenase family. Ubiquitous, but highly expressed in roots. Expressed in vasculature, root and shoot meristems, distal part of cotyledons and leaves, anther, stigma and pollen grains. Detected at the tip of the cotyledons in late embryos.

The protein localises to the plastid. The protein resides in the chloroplast. It carries out the reaction (2R)-3-phosphoglycerate + NAD(+) = 3-phosphooxypyruvate + NADH + H(+). The protein operates within amino-acid biosynthesis; L-serine biosynthesis; L-serine from 3-phospho-D-glycerate: step 1/3. With respect to regulation, partially inhibited by 5 mM serine. In terms of biological role, involved in the plastidial phosphorylated pathway of serine biosynthesis (PPSB). Required for mature pollen development. The chain is D-3-phosphoglycerate dehydrogenase 1, chloroplastic (PGDH1) from Arabidopsis thaliana (Mouse-ear cress).